We begin with the raw amino-acid sequence, 307 residues long: Putative ankyrin repeat protein L59 (307 aa).

ANK repeat units follow at residues L41–K67, I68–N97, H98–A127, D129–N157, R158–T187, D188–A217, G219–I247, D248–A277, and N279–Y307.

In Acanthamoeba polyphaga (Amoeba), this protein is Putative ankyrin repeat protein L59.